The sequence spans 413 residues: Aspartate aminotransferase, cytoplasmic (413 aa).

L-aspartate contacts are provided by Gly-39 and Trp-141. Ser-149 carries the post-translational modification Phosphoserine. An L-aspartate-binding site is contributed by Asn-195. N6-(pyridoxal phosphate)lysine is present on Lys-259. An N6-succinyllysine modification is found at Lys-318. Arg-387 is a binding site for L-aspartate.

The protein belongs to the class-I pyridoxal-phosphate-dependent aminotransferase family. In terms of assembly, homodimer. It depends on pyridoxal 5'-phosphate as a cofactor. Expressed in neurons of the retina. Localizes to the inner and outer plexiform layers, the inner and outer nuclear layer and the outer segments of photoreceptors.

Its subcellular location is the cytoplasm. The catalysed reaction is L-aspartate + 2-oxoglutarate = oxaloacetate + L-glutamate. It catalyses the reaction L-cysteine + 2-oxoglutarate = 2-oxo-3-sulfanylpropanoate + L-glutamate. It carries out the reaction (2S)-2-aminobutanoate + 2-oxoglutarate = 2-oxobutanoate + L-glutamate. The enzyme catalyses 3-sulfino-L-alanine + 2-oxoglutarate = 3-sulfinopyruvate + L-glutamate. Inhibited by calcium ions. Biosynthesis of L-glutamate from L-aspartate or L-cysteine. Important regulator of levels of glutamate, the major excitatory neurotransmitter of the vertebrate central nervous system. Acts as a scavenger of glutamate in brain neuroprotection. The aspartate aminotransferase activity is involved in hepatic glucose synthesis during development and in adipocyte glyceroneogenesis. Using L-cysteine as substrate, regulates levels of mercaptopyruvate, an important source of hydrogen sulfide. Mercaptopyruvate is converted into H(2)S via the action of 3-mercaptopyruvate sulfurtransferase (3MST). Hydrogen sulfide is an important synaptic modulator and neuroprotectant in the brain. In Mus musculus (Mouse), this protein is Aspartate aminotransferase, cytoplasmic.